The chain runs to 78 residues: D-alanyl carrier protein (78 aa).

The Carrier domain occupies 1–78 (MEFKEQVLDL…KIVEALEELR (78 aa)). Ser36 carries the O-(pantetheine 4'-phosphoryl)serine modification.

The protein belongs to the DltC family. In terms of processing, 4'-phosphopantetheine is transferred from CoA to a specific serine of apo-DCP.

The protein resides in the cytoplasm. The protein operates within cell wall biogenesis; lipoteichoic acid biosynthesis. Carrier protein involved in the D-alanylation of lipoteichoic acid (LTA). The loading of thioester-linked D-alanine onto DltC is catalyzed by D-alanine--D-alanyl carrier protein ligase DltA. The DltC-carried D-alanyl group is further transferred to cell membrane phosphatidylglycerol (PG) by forming an ester bond, probably catalyzed by DltD. D-alanylation of LTA plays an important role in modulating the properties of the cell wall in Gram-positive bacteria, influencing the net charge of the cell wall. The sequence is that of D-alanyl carrier protein from Staphylococcus haemolyticus (strain JCSC1435).